A 126-amino-acid chain; its full sequence is Large ribosomal subunit protein bL12 (126 aa).

Belongs to the bacterial ribosomal protein bL12 family. As to quaternary structure, homodimer. Part of the ribosomal stalk of the 50S ribosomal subunit. Forms a multimeric L10(L12)X complex, where L10 forms an elongated spine to which 2 to 4 L12 dimers bind in a sequential fashion. Binds GTP-bound translation factors.

Its function is as follows. Forms part of the ribosomal stalk which helps the ribosome interact with GTP-bound translation factors. Is thus essential for accurate translation. In Elusimicrobium minutum (strain Pei191), this protein is Large ribosomal subunit protein bL12.